Reading from the N-terminus, the 173-residue chain is Probable F-box protein At1g27490 (173 aa).

One can recognise an F-box domain in the interval 1-46 (MEWSLPVDLQEEILSRVPAKSLARWKSTPKQWKGPISIEFLHLLRS).

This Arabidopsis thaliana (Mouse-ear cress) protein is Probable F-box protein At1g27490.